We begin with the raw amino-acid sequence, 1161 residues long: Cingulin (1161 aa).

Residues 1–403 (MSSLSADRKP…SLIHERFCGV (403 aa)) form a head region. Disordered stretches follow at residues 29–53 (GGFPDKSRLANGVGGVSNGTSSPSK), 79–309 (SYGV…LGRD), 649–678 (QSELEKQKAETLKKQEELKSATRASEKRET), 699–721 (SKAIEKTQQPLVSDQTKDPESNL), 739–773 (RLHSSVPDSSSSDALEEENRSLKTQLEESRRAASR), and 1123–1161 (QSRRSTLGSTLSSDEEDNYSDTKSITSILTDSPLQTTSC). The ZIM motif lies at 51 to 65 (PSKYGVAVRVQGISG). 2 stretches are compositionally biased toward polar residues: residues 84–104 (LKTQPQIQSAPPVVSQTSPYN) and 117–129 (PQGSYNPTDQPSS). Positions 189 to 203 (NGIGSSLNGTGLNGS) are enriched in low complexity. Polar residues predominate over residues 273 to 305 (EASSTSPTINPYAPNTSATVPKLNSTKPSSTGS). The stretch at 413–1128 (SNMKTELEQA…RKIQQSRRST (716 aa)) forms a coiled coil. The span at 742-751 (SSVPDSSSSD) shows a compositional bias: low complexity. Over residues 755-773 (EENRSLKTQLEESRRAASR) the composition is skewed to basic and acidic residues. Residues 1122–1161 (QQSRRSTLGSTLSSDEEDNYSDTKSITSILTDSPLQTTSC) form a tail region. The span at 1124–1134 (SRRSTLGSTLS) shows a compositional bias: low complexity. Positions 1143–1161 (DTKSITSILTDSPLQTTSC) are enriched in polar residues.

It belongs to the cingulin family. Homodimer.

It is found in the cell junction. The protein resides in the tight junction. In terms of biological role, probably plays a role in the formation and regulation of the tight junction (TJ) paracellular permeability barrier. Note=Localizes to the apical junction complex composed of tight and adherens junctions. This Danio rerio (Zebrafish) protein is Cingulin.